The following is a 121-amino-acid chain: MEAKAIARHIRVTPMKARRVVNLVRGLQANEALAILKFAPQAASEPVFKVVQSAISNARVLADRDGVAFDEGDLIISEAFVDEGPTMKRFQPRAQGRAFQIKKRTSHITVVVATPEKEEAR.

This sequence belongs to the universal ribosomal protein uL22 family. As to quaternary structure, part of the 50S ribosomal subunit.

This protein binds specifically to 23S rRNA; its binding is stimulated by other ribosomal proteins, e.g. L4, L17, and L20. It is important during the early stages of 50S assembly. It makes multiple contacts with different domains of the 23S rRNA in the assembled 50S subunit and ribosome. Its function is as follows. The globular domain of the protein is located near the polypeptide exit tunnel on the outside of the subunit, while an extended beta-hairpin is found that lines the wall of the exit tunnel in the center of the 70S ribosome. This chain is Large ribosomal subunit protein uL22, found in Pseudarthrobacter chlorophenolicus (strain ATCC 700700 / DSM 12829 / CIP 107037 / JCM 12360 / KCTC 9906 / NCIMB 13794 / A6) (Arthrobacter chlorophenolicus).